The following is a 386-amino-acid chain: MISHLFQTYGRRTVEFVKGNGTKVIDNNGKQYLDFTSGIGVCNLGHCHPTVMKAVQEQLNDIWHISNLFTNSLQEEVASLLTENIALDYVFFCNSGAEANEAALKLARKHTGKSLVVTCEQSFHGRTFGTMSATGQNKVKEGFGPLLPSFLHTPFNDIKALKEVMNEEVAAVMVEVVQGEGGVIPADLSFLKEIETLCKKFGSLFIIDEVQTGIGRTGTLFAYEQMGIDPHIVTTAKALGNGIPVGAMIGRKELGTSFTAGSHGSTFGGNYVAMAAAKEVLQVSKRLSFLKEVQEKGEYVLQKLQEELQHVECIQNIRGKGLMVGIECTHEVASFIEQLEKEGLLVLQAGPNVIRLLPPLIVTNEELEQAVYMIKKVVCTKNVSII.

Residues 96 to 97 (GA) and Phe123 each bind pyridoxal 5'-phosphate. Arg126 is a N(2)-acetyl-L-ornithine binding site. Pyridoxal 5'-phosphate is bound at residue 208–211 (DEVQ). Lys237 is subject to N6-(pyridoxal phosphate)lysine. Ser265 contacts N(2)-acetyl-L-ornithine. A pyridoxal 5'-phosphate-binding site is contributed by Thr266.

It belongs to the class-III pyridoxal-phosphate-dependent aminotransferase family. ArgD subfamily. In terms of assembly, homodimer. Pyridoxal 5'-phosphate is required as a cofactor.

It is found in the cytoplasm. The enzyme catalyses N(2)-acetyl-L-ornithine + 2-oxoglutarate = N-acetyl-L-glutamate 5-semialdehyde + L-glutamate. It functions in the pathway amino-acid biosynthesis; L-arginine biosynthesis; N(2)-acetyl-L-ornithine from L-glutamate: step 4/4. This Bacillus anthracis protein is Acetylornithine aminotransferase.